The chain runs to 282 residues: Bifunctional protein FolD (282 aa).

Residues 165–167 (GRS), S190, and T231 contribute to the NADP(+) site.

The protein belongs to the tetrahydrofolate dehydrogenase/cyclohydrolase family. Homodimer.

It catalyses the reaction (6R)-5,10-methylene-5,6,7,8-tetrahydrofolate + NADP(+) = (6R)-5,10-methenyltetrahydrofolate + NADPH. The catalysed reaction is (6R)-5,10-methenyltetrahydrofolate + H2O = (6R)-10-formyltetrahydrofolate + H(+). It functions in the pathway one-carbon metabolism; tetrahydrofolate interconversion. In terms of biological role, catalyzes the oxidation of 5,10-methylenetetrahydrofolate to 5,10-methenyltetrahydrofolate and then the hydrolysis of 5,10-methenyltetrahydrofolate to 10-formyltetrahydrofolate. This is Bifunctional protein FolD from Clostridium botulinum (strain Alaska E43 / Type E3).